A 339-amino-acid chain; its full sequence is Glycerol-3-phosphate dehydrogenase [NAD(P)+] (339 aa).

Residues serine 15, tyrosine 16, histidine 36, and lysine 110 each coordinate NADPH. Lysine 110, glycine 139, and threonine 141 together coordinate sn-glycerol 3-phosphate. Position 143 (alanine 143) interacts with NADPH. Positions 195, 248, 258, 259, and 260 each coordinate sn-glycerol 3-phosphate. Catalysis depends on lysine 195, which acts as the Proton acceptor. NADPH is bound at residue arginine 259. Residues valine 283 and glutamate 285 each contribute to the NADPH site.

The protein belongs to the NAD-dependent glycerol-3-phosphate dehydrogenase family.

The protein resides in the cytoplasm. The catalysed reaction is sn-glycerol 3-phosphate + NAD(+) = dihydroxyacetone phosphate + NADH + H(+). It catalyses the reaction sn-glycerol 3-phosphate + NADP(+) = dihydroxyacetone phosphate + NADPH + H(+). It functions in the pathway membrane lipid metabolism; glycerophospholipid metabolism. In terms of biological role, catalyzes the reduction of the glycolytic intermediate dihydroxyacetone phosphate (DHAP) to sn-glycerol 3-phosphate (G3P), the key precursor for phospholipid synthesis. The protein is Glycerol-3-phosphate dehydrogenase [NAD(P)+] of Enterobacter sp. (strain 638).